Reading from the N-terminus, the 165-residue chain is Regulator of sigma D (165 aa).

The protein belongs to the Rsd/AlgQ family. As to quaternary structure, interacts with RpoD.

It is found in the cytoplasm. In terms of biological role, binds RpoD and negatively regulates RpoD-mediated transcription activation by preventing the interaction between the primary sigma factor RpoD with the catalytic core of the RNA polymerase and with promoter DNA. May be involved in replacement of the RNA polymerase sigma subunit from RpoD to RpoS during the transition from exponential growth to the stationary phase. The polypeptide is Regulator of sigma D (Enterobacter sp. (strain 638)).